A 141-amino-acid polypeptide reads, in one-letter code: Nucleoside diphosphate kinase (141 aa).

Residues K11, F59, R87, T93, R104, and N114 each contribute to the ATP site. H117 (pros-phosphohistidine intermediate) is an active-site residue.

This sequence belongs to the NDK family. Homotetramer. It depends on Mg(2+) as a cofactor.

It localises to the cytoplasm. It catalyses the reaction a 2'-deoxyribonucleoside 5'-diphosphate + ATP = a 2'-deoxyribonucleoside 5'-triphosphate + ADP. The enzyme catalyses a ribonucleoside 5'-diphosphate + ATP = a ribonucleoside 5'-triphosphate + ADP. In terms of biological role, major role in the synthesis of nucleoside triphosphates other than ATP. The ATP gamma phosphate is transferred to the NDP beta phosphate via a ping-pong mechanism, using a phosphorylated active-site intermediate. The chain is Nucleoside diphosphate kinase from Laribacter hongkongensis (strain HLHK9).